The sequence spans 92 residues: Kappa-scoloptoxin(15)-Ssd2a (92 aa).

Residues 1-20 form the signal peptide; sequence MKMVYLGLFLIITSCVISSG.

Post-translationally, contains 3 disulfide bonds. As to expression, expressed by the venom gland.

Its subcellular location is the secreted. In terms of biological role, inhibits voltage-gated potassium channels (Kv) (IC(50)=about 10 nM), when tested on DRG neurons. This is Kappa-scoloptoxin(15)-Ssd2a from Scolopendra dehaani (Thai centipede).